The following is a 175-amino-acid chain: ATP-dependent protease subunit HslV (175 aa).

Thr-2 is an active-site residue. Residues Gly-158, Cys-161, and Thr-164 each coordinate Na(+).

The protein belongs to the peptidase T1B family. HslV subfamily. In terms of assembly, a double ring-shaped homohexamer of HslV is capped on each side by a ring-shaped HslU homohexamer. The assembly of the HslU/HslV complex is dependent on binding of ATP.

It is found in the cytoplasm. The catalysed reaction is ATP-dependent cleavage of peptide bonds with broad specificity.. Allosterically activated by HslU binding. Protease subunit of a proteasome-like degradation complex believed to be a general protein degrading machinery. This is ATP-dependent protease subunit HslV from Haemophilus influenzae (strain PittGG).